We begin with the raw amino-acid sequence, 52 residues long: Large ribosomal subunit protein bL33 (52 aa).

This sequence belongs to the bacterial ribosomal protein bL33 family.

This Anaeromyxobacter sp. (strain Fw109-5) protein is Large ribosomal subunit protein bL33.